A 179-amino-acid chain; its full sequence is Large ribosomal subunit protein uL5 (179 aa).

The protein belongs to the universal ribosomal protein uL5 family. In terms of assembly, part of the 50S ribosomal subunit; part of the 5S rRNA/L5/L18/L25 subcomplex. Contacts the 5S rRNA and the P site tRNA. Forms a bridge to the 30S subunit in the 70S ribosome.

Its function is as follows. This is one of the proteins that bind and probably mediate the attachment of the 5S RNA into the large ribosomal subunit, where it forms part of the central protuberance. In the 70S ribosome it contacts protein S13 of the 30S subunit (bridge B1b), connecting the 2 subunits; this bridge is implicated in subunit movement. Contacts the P site tRNA; the 5S rRNA and some of its associated proteins might help stabilize positioning of ribosome-bound tRNAs. The polypeptide is Large ribosomal subunit protein uL5 (Bacillus cereus (strain 03BB102)).